A 145-amino-acid chain; its full sequence is 3-hydroxyacyl-[acyl-carrier-protein] dehydratase FabZ (145 aa).

The active site involves histidine 47.

Belongs to the thioester dehydratase family. FabZ subfamily.

The protein resides in the cytoplasm. It catalyses the reaction a (3R)-hydroxyacyl-[ACP] = a (2E)-enoyl-[ACP] + H2O. In terms of biological role, involved in unsaturated fatty acids biosynthesis. Catalyzes the dehydration of short chain beta-hydroxyacyl-ACPs and long chain saturated and unsaturated beta-hydroxyacyl-ACPs. This Thiobacillus denitrificans (strain ATCC 25259 / T1) protein is 3-hydroxyacyl-[acyl-carrier-protein] dehydratase FabZ.